The chain runs to 870 residues: DNA mismatch repair protein MutS (870 aa).

621-628 (GPNMAGKS) provides a ligand contact to ATP. Residues 813-834 (GAPRIAKSRRQRTPDPSPQFSL) are disordered.

The protein belongs to the DNA mismatch repair MutS family.

In terms of biological role, this protein is involved in the repair of mismatches in DNA. It is possible that it carries out the mismatch recognition step. This protein has a weak ATPase activity. This chain is DNA mismatch repair protein MutS, found in Pelobacter propionicus (strain DSM 2379 / NBRC 103807 / OttBd1).